Reading from the N-terminus, the 472-residue chain is Velvet complex subunit umv2 (472 aa).

Basic and acidic residues-rich tracts occupy residues 1–10, 29–59, 67–80, and 89–105; these read MSRSDTDGRD, SQRR…DSHG, YSRD…HRGD, and SYQR…EQER. Disordered stretches follow at residues 1–121, 281–327, and 433–472; these read MSRS…PLEA, CDDG…QFGG, and SQGI…EDDE. The span at 106 to 116 shows a compositional bias: low complexity; it reads SYGGASASRSS. Residues 158-441 form the Velvet domain; it reads ENGRRYRLVV…ASQGIKIPVR (284 aa). Polar residues predominate over residues 286–298; that stretch reads RSSTHPQHASEST. Residues 456-466 are compositionally biased toward gly residues; that stretch reads DGMGDYDGASG.

This sequence belongs to the velvet family. VelB subfamily. Component of the heterotrimeric velvet complex composed of laeA, veA and velB; VeA acting as a bridging protein between laeA and velB. Forms a heterodimeric complex with vosA; the formation of the velB-vosA complex is light-dependent.

It localises to the nucleus. Its subcellular location is the cytoplasm. In terms of biological role, component of the velvet transcription factor complex that controls sexual/asexual developmental ratio in response to light, promoting sexual development in the darkness while stimulating asexual sporulation under illumination. The velvet complex acts as a global regulator for secondary metabolite gene expression. Component of the velB-VosA heterodimeric complex that plays a dual role in activating genes associated with spore maturation and repressing certain development-associated genes. The velB-VosA complex binds DNA through the DNA-binding domain of vosA that recognizes an 11-nucleotide consensus sequence 5'-CTGGCCGCGGC-3' consisting of two motifs in the promoters of key developmental regulatory genes. Required for full virulence on seedlings. This is Velvet complex subunit umv2 from Mycosarcoma maydis (Corn smut fungus).